The chain runs to 155 residues: Trypsin/factor XIIA inhibitor (155 aa).

An N-terminal signal peptide occupies residues 1-28 (MASSSSSSHRRLILAAAVLLSVLAAASA). 5 disulfide bridges follow: C34/C83, C48/C72, C57/C114, C73/C132, and C85/C143. The active site involves R62. Positions 139 to 155 (GVAECPWILGGGTMPSK) are cleaved as a propeptide — C-terminal peptide.

Belongs to the protease inhibitor I6 (cereal trypsin/alpha-amylase inhibitor) family. Monomer.

It is found in the secreted. In terms of biological role, potent inhibitor of mammalian trypsin and a specific inhibitor of factor XIIa (activated hageman factor). The protein is Trypsin/factor XIIA inhibitor of Zea mays (Maize).